The following is a 220-amino-acid chain: Cysteine-rich venom protein (220 aa).

The SCP domain maps to 20–147; that stretch reads DLHNSLRRSV…AYKYFYVCQY (128 aa). 8 disulfide bridges follow: C56-C134, C73-C148, C129-C145, C167-C174, C170-C179, C183-C215, C192-C209, and C200-C213. A ShKT domain is found at 183-215; sequence CTREDEFINCNDLVKQGCQTDYLKSNCAASCFC.

As to expression, expressed by the venom gland.

The protein resides in the secreted. Its function is as follows. Blocks contraction of smooth muscle elicited by high potassium-induced depolarization, but does not block caffeine-stimulated contraction. May target voltage-gated calcium channels in smooth muscle. The sequence is that of Cysteine-rich venom protein from Echis coloratus (Carpet viper).